Reading from the N-terminus, the 446-residue chain is Exodeoxyribonuclease 7 large subunit (446 aa).

This sequence belongs to the XseA family. Heterooligomer composed of large and small subunits.

Its subcellular location is the cytoplasm. The enzyme catalyses Exonucleolytic cleavage in either 5'- to 3'- or 3'- to 5'-direction to yield nucleoside 5'-phosphates.. Bidirectionally degrades single-stranded DNA into large acid-insoluble oligonucleotides, which are then degraded further into small acid-soluble oligonucleotides. This Streptococcus equi subsp. zooepidemicus (strain MGCS10565) protein is Exodeoxyribonuclease 7 large subunit.